The chain runs to 80 residues: UPF0154 protein SaurJH1_1431 (80 aa).

Residues 4-24 (WLAIIFIVAALILGLIGGFLL) traverse the membrane as a helical segment.

Belongs to the UPF0154 family.

The protein resides in the cell membrane. This Staphylococcus aureus (strain JH1) protein is UPF0154 protein SaurJH1_1431.